We begin with the raw amino-acid sequence, 328 residues long: 2-oxoglutarate-dependent dioxygenase gloE (328 aa).

Positions 170-271 constitute a Fe2OG dioxygenase domain; it reads TRTNLTFLKY…RYTLAYFLRP (102 aa). Fe cation is bound by residues His-194, Asp-196, and His-249. 2-oxoglutarate is bound at residue Arg-262.

This sequence belongs to the iron/ascorbate-dependent oxidoreductase family. Fe(2+) is required as a cofactor.

It participates in mycotoxin biosynthesis. Functionally, 2-oxoglutarate-dependent dioxygenase; part of the gene cluster that mediates the biosynthesis of pneumocandins, lipohexapeptides of the echinocandin family that prevent fungal cell wall formation by non-competitive inhibition of beta-1,3-glucan synthase. The 10,12-dimethylmyristoyl side chain is synthesized by the reducing polyketide synthase gloL/GLPKS4. The thioesterase gloN/GLHYD exclusively interacts with gloL/GLPKS4 to maintain turnover of the polyketide side chain. The 10R,12S-dimethylmyristic acid is then transferred to the first thiolation domain of the nonribosomal peptide synthetase gloA/GLNRPS4 by the acyl-AMP ligase gloD/GLligase, followed by its acylation to L-ornithine to trigger elongation of the cyclic hexapeptide. L-ornithine, 4R-hydroxyl-L-proline (generated from L-proline by the dioxygenase gloF/GLOXY2), 3S-hydroxyl-L-homotyrosine (generated by gloG/GLHtyB, gloH/GLHtyA, gloI/GLHtyC, gloJ/GLHtyD and hydroxylated at C-3 by the dioxygenase gloM/GLOXY1), 3R-hydroxyl-L-glutamine (generated from L-glutamine probably by the dioxygenase gloE/GLOXY3) and 3S-hydroxyl-L-proline (generated from L-proline by the dioxygenase gloF/GLOXY2 to yield pneumocandin B0), or 3S-hydroxyl-4S-methyl-L-proline (generated from L-leucine by the dioxygenase gloC/GLOXY4 to yield pneumocandin A0) are sequentially added to the growing chain. The last C domain of gloA/GLNRPS4 is proposed to be responsible for cyclization by condensation to form the peptide bond between L-ornithine and 3S-hydroxyl-4S-methyl-L-proline (for pneumocandin A0) or 3S-hydroxyl-L-proline (for pneumocandin B0). Finally, the subsequent C-4 hydroxylation of 3S-hydroxyl-L-homotyrosine and L-ornithine dihydroxylation at C-4 and C-5 are performed by the cytochrome P450 monooxygenases gloP/GLP450-1 and gloO/GLP450-2, respectively. The polypeptide is 2-oxoglutarate-dependent dioxygenase gloE (Glarea lozoyensis (strain ATCC 20868 / MF5171)).